The sequence spans 339 residues: Cathepsin B (339 aa).

Positions 1–17 are cleaved as a signal peptide; sequence MWWSLIPLSCLLALTSA. The propeptide at 18–79 is activation peptide; sequence HDKPSSHPLS…ERVGFSEDIN (62 aa). 6 cysteine pairs are disulfide-bonded: Cys-93-Cys-122, Cys-105-Cys-150, Cys-141-Cys-207, Cys-142-Cys-146, Cys-179-Cys-211, and Cys-187-Cys-198. Cys-108 is a catalytic residue. Asn-192 carries an N-linked (GlcNAc...) asparagine glycan. Residue Lys-220 is modified to N6-acetyllysine. Catalysis depends on residues His-278 and Asn-298. A propeptide spanning residues 334–339 is cleaved from the precursor; sequence QYWGRF.

The protein belongs to the peptidase C1 family. Dimer of a heavy chain and a light chain cross-linked by a disulfide bond. Interacts with SRPX2. Directly interacts with SHKBP1. As to expression, expressed in the epithelial cells of the prostate and mammary gland.

It localises to the lysosome. The protein resides in the melanosome. It is found in the secreted. The protein localises to the extracellular space. Its subcellular location is the apical cell membrane. It carries out the reaction Hydrolysis of proteins with broad specificity for peptide bonds. Preferentially cleaves -Arg-Arg-|-Xaa bonds in small molecule substrates (thus differing from cathepsin L). In addition to being an endopeptidase, shows peptidyl-dipeptidase activity, liberating C-terminal dipeptides.. Its function is as follows. Thiol protease which is believed to participate in intracellular degradation and turnover of proteins. Cleaves matrix extracellular phosphoglycoprotein MEPE. Involved in the solubilization of cross-linked TG/thyroglobulin in the thyroid follicle lumen. Has also been implicated in tumor invasion and metastasis. The polypeptide is Cathepsin B (Ctsb) (Rattus norvegicus (Rat)).